The primary structure comprises 290 residues: Nucleoid occlusion protein (290 aa).

Residues 153–172 constitute a DNA-binding region (H-T-H motif); it reads EALAQRLGKGQSTVANKLRL.

Belongs to the ParB family.

The protein localises to the cytoplasm. It is found in the nucleoid. Functionally, effects nucleoid occlusion by binding relatively nonspecifically to DNA and preventing the assembly of the division machinery in the vicinity of the nucleoid, especially under conditions that disturb the cell cycle. It helps to coordinate cell division and chromosome segregation by preventing the formation of the Z ring through the nucleoid, which would cause chromosome breakage. This is Nucleoid occlusion protein from Bacillus mycoides (strain KBAB4) (Bacillus weihenstephanensis).